Consider the following 157-residue polypeptide: 2-C-methyl-D-erythritol 2,4-cyclodiphosphate synthase (157 aa).

2 residues coordinate a divalent metal cation: Asp-8 and His-10. Residues 8-10 (DIH) and 34-35 (HS) contribute to the 4-CDP-2-C-methyl-D-erythritol 2-phosphate site. Residue His-42 coordinates a divalent metal cation. Residues 56 to 58 (DIG), 61 to 65 (FPDTD), 132 to 135 (TTNE), and Arg-142 contribute to the 4-CDP-2-C-methyl-D-erythritol 2-phosphate site.

The protein belongs to the IspF family. In terms of assembly, homotrimer. A divalent metal cation is required as a cofactor.

The catalysed reaction is 4-CDP-2-C-methyl-D-erythritol 2-phosphate = 2-C-methyl-D-erythritol 2,4-cyclic diphosphate + CMP. It participates in isoprenoid biosynthesis; isopentenyl diphosphate biosynthesis via DXP pathway; isopentenyl diphosphate from 1-deoxy-D-xylulose 5-phosphate: step 4/6. Its function is as follows. Involved in the biosynthesis of isopentenyl diphosphate (IPP) and dimethylallyl diphosphate (DMAPP), two major building blocks of isoprenoid compounds. Catalyzes the conversion of 4-diphosphocytidyl-2-C-methyl-D-erythritol 2-phosphate (CDP-ME2P) to 2-C-methyl-D-erythritol 2,4-cyclodiphosphate (ME-CPP) with a corresponding release of cytidine 5-monophosphate (CMP). The sequence is that of 2-C-methyl-D-erythritol 2,4-cyclodiphosphate synthase from Chloroherpeton thalassium (strain ATCC 35110 / GB-78).